A 137-amino-acid polypeptide reads, in one-letter code: Putative pre-16S rRNA nuclease (137 aa).

It belongs to the YqgF nuclease family.

The protein localises to the cytoplasm. Could be a nuclease involved in processing of the 5'-end of pre-16S rRNA. The polypeptide is Putative pre-16S rRNA nuclease (Bacillus cereus (strain G9842)).